The chain runs to 145 residues: Hemoglobin subunit beta-3 (145 aa).

A Globin domain is found at 1-145; that stretch reads MLTAEEKAAV…VANALAHRYH (145 aa). Position 11 is a phosphothreonine (T11). K58 carries the N6-acetyllysine modification. H62 lines the heme b pocket. K81 is subject to N6-acetyllysine. Residue H91 participates in heme b binding. C92 carries the post-translational modification S-nitrosocysteine.

The protein belongs to the globin family. As to quaternary structure, heterotetramer of two alpha chains and two beta chains. As to expression, red blood cells.

Functionally, involved in oxygen transport from the lung to the various peripheral tissues. The chain is Hemoglobin subunit beta-3 (HBB) from Odocoileus virginianus virginianus (Virginia white-tailed deer).